The sequence spans 240 residues: Dihydromonapterin reductase (240 aa).

Tyr152 functions as the Proton acceptor in the catalytic mechanism.

The protein belongs to the short-chain dehydrogenases/reductases (SDR) family. FolM subfamily.

It carries out the reaction (6S)-5,6,7,8-tetrahydrofolate + NADP(+) = 7,8-dihydrofolate + NADPH + H(+). The catalysed reaction is 7,8-dihydromonapterin + NADPH + H(+) = 5,6,7,8-tetrahydromonapterin + NADP(+). Functionally, catalyzes the reduction of dihydromonapterin to tetrahydromonapterin. Also has lower activity with dihydrofolate. In Shigella flexneri serotype 5b (strain 8401), this protein is Dihydromonapterin reductase (folM).